Consider the following 245-residue polypeptide: 1-(5-phosphoribosyl)-5-[(5-phosphoribosylamino)methylideneamino] imidazole-4-carboxamide isomerase (245 aa).

Asp-11 functions as the Proton acceptor in the catalytic mechanism. Catalysis depends on Asp-132, which acts as the Proton donor.

It belongs to the HisA/HisF family.

It is found in the cytoplasm. The catalysed reaction is 1-(5-phospho-beta-D-ribosyl)-5-[(5-phospho-beta-D-ribosylamino)methylideneamino]imidazole-4-carboxamide = 5-[(5-phospho-1-deoxy-D-ribulos-1-ylimino)methylamino]-1-(5-phospho-beta-D-ribosyl)imidazole-4-carboxamide. It functions in the pathway amino-acid biosynthesis; L-histidine biosynthesis; L-histidine from 5-phospho-alpha-D-ribose 1-diphosphate: step 4/9. In Geobacillus kaustophilus (strain HTA426), this protein is 1-(5-phosphoribosyl)-5-[(5-phosphoribosylamino)methylideneamino] imidazole-4-carboxamide isomerase.